Here is a 787-residue protein sequence, read N- to C-terminus: Aconitate hydratase, mitochondrial (787 aa).

A mitochondrion-targeting transit peptide spans 1–33 (MISTRLARAGALAPKSRLFLGTRAFATVGDSPL). Residues Gln104 and 197–199 (DSH) each bind substrate. [4Fe-4S] cluster-binding residues include Cys390, Cys453, and Cys456. The substrate site is built by Arg479 and Arg484. The interval 529–559 (LQPPTGEGLPAKGYDPGRDTYQAPPADRSSV) is disordered. Residues Arg612 and 675–676 (SR) contribute to the substrate site.

It belongs to the aconitase/IPM isomerase family. [4Fe-4S] cluster serves as cofactor.

The protein resides in the mitochondrion. It catalyses the reaction citrate = D-threo-isocitrate. The catalysed reaction is (2R)-homocitrate = cis-homoaconitate + H2O. It functions in the pathway carbohydrate metabolism; tricarboxylic acid cycle; isocitrate from oxaloacetate: step 2/2. Its pathway is amino-acid biosynthesis; L-lysine biosynthesis via AAA pathway; L-alpha-aminoadipate from 2-oxoglutarate: step 2/5. Functionally, catalyzes the isomerization of citrate to isocitrate via cis-aconitate, a step in the citric acid cycle. Also catalyzes the reversible dehydration of (R)-homocitrate to cis-homoaconitate, a step in the alpha-aminoadipate pathway for lysine biosynthesis. This chain is Aconitate hydratase, mitochondrial (acoA), found in Aspergillus fumigatus (strain ATCC MYA-4609 / CBS 101355 / FGSC A1100 / Af293) (Neosartorya fumigata).